We begin with the raw amino-acid sequence, 318 residues long: Protoheme IX farnesyltransferase (318 aa).

Helical transmembrane passes span 29-49 (IIPL…QGQV), 51-71 (PVLL…AQTI), 102-122 (LIFA…FANL), 123-143 (LAAS…THWL), 151-171 (IVIG…AVTG), 179-199 (LIFA…ALMI), 219-239 (ATVK…LLLV), 241-261 (PLHS…AVFI), and 280-300 (LFLY…IDSL).

The protein belongs to the UbiA prenyltransferase family. Protoheme IX farnesyltransferase subfamily.

It is found in the cell inner membrane. The catalysed reaction is heme b + (2E,6E)-farnesyl diphosphate + H2O = Fe(II)-heme o + diphosphate. It functions in the pathway porphyrin-containing compound metabolism; heme O biosynthesis; heme O from protoheme: step 1/1. Converts heme B (protoheme IX) to heme O by substitution of the vinyl group on carbon 2 of heme B porphyrin ring with a hydroxyethyl farnesyl side group. In Trichormus variabilis (strain ATCC 29413 / PCC 7937) (Anabaena variabilis), this protein is Protoheme IX farnesyltransferase.